The primary structure comprises 333 residues: Methylosome protein WDR77 (333 aa).

WD repeat units follow at residues 16-59 (CMEV…GAPN), 68-106 (QTEA…SLLV), 113-152 (EHDD…VLKS), 155-195 (AHSS…PATR), 199-240 (CASD…SAQT), 243-283 (VHSQ…VFRD), and 285-328 (SHRD…NLIA).

Heterotetramer; dimer of heterodimer with prmt5. Interacts with histone h2a and h4 and with nucleoplasmin. Detected in egg (at protein level).

The protein resides in the cytoplasm. The protein localises to the nucleus. Functionally, non-catalytic component of the 20S prmt5-containing methyltransferase complex, which modifies specific arginines to dimethylarginines in several spliceosomal Sm proteins and histones. Required for normal prmt5 methyltransferase activity. This Xenopus laevis (African clawed frog) protein is Methylosome protein WDR77.